The primary structure comprises 126 residues: Holo-[acyl-carrier-protein] synthase (126 aa).

Mg(2+) is bound by residues Asp-9 and Glu-58.

The protein belongs to the P-Pant transferase superfamily. AcpS family. Mg(2+) serves as cofactor.

The protein resides in the cytoplasm. The catalysed reaction is apo-[ACP] + CoA = holo-[ACP] + adenosine 3',5'-bisphosphate + H(+). Transfers the 4'-phosphopantetheine moiety from coenzyme A to a Ser of acyl-carrier-protein. The sequence is that of Holo-[acyl-carrier-protein] synthase from Klebsiella pneumoniae subsp. pneumoniae (strain ATCC 700721 / MGH 78578).